A 117-amino-acid polypeptide reads, in one-letter code: RutC family protein HD_0322 (117 aa).

It belongs to the RutC family.

The polypeptide is RutC family protein HD_0322 (Haemophilus ducreyi (strain 35000HP / ATCC 700724)).